The primary structure comprises 784 residues: ATP-dependent 6-phosphofructokinase, platelet type (784 aa).

Met-1 carries the post-translational modification N-acetylmethionine. Residues 1-399 (MDADDSRAPK…NLNTYKRLAI (399 aa)) form an N-terminal catalytic PFK domain 1 region. A phosphoserine mark is found at Ser-6, Ser-12, and Ser-21. ATP is bound by residues Gly-34, 97 to 98 (RC), and 127 to 130 (GDGS). Residue Asp-128 participates in Mg(2+) binding. Position 142 is a phosphoserine (Ser-142). Residues 173–175 (SID), Arg-210, 217–219 (MGR), Glu-273, Arg-301, and 307–310 (HVQR) each bind substrate. Asp-175 functions as the Proton acceptor in the catalytic mechanism. Ser-386 is modified (phosphoserine). The residue at position 395 (Lys-395) is an N6-acetyllysine. Residues 400 to 411 (KLPDDQIPKTNC) form an interdomain linker region. The interval 412–784 (NVAVINVGAP…QLEHVQPWSV (373 aa)) is C-terminal regulatory PFK domain 2. A beta-D-fructose 2,6-bisphosphate-binding site is contributed by Arg-481. N6-acetyllysine is present on Lys-486. Residues 538 to 542 (TVSNN), Arg-576, 583 to 585 (MGG), and Glu-639 each bind beta-D-fructose 2,6-bisphosphate. An O-linked (GlcNAc) serine glycan is attached at Ser-540. Tyr-651 is subject to Phosphotyrosine. Residues Arg-665 and 671–674 (HMQQ) contribute to the beta-D-fructose 2,6-bisphosphate site. N6-acetyllysine is present on Lys-688. Arg-744 contributes to the beta-D-fructose 2,6-bisphosphate binding site. Phosphoserine is present on Ser-783.

Belongs to the phosphofructokinase type A (PFKA) family. ATP-dependent PFK group I subfamily. Eukaryotic two domain clade 'E' sub-subfamily. Homo- and heterotetramers. Phosphofructokinase (PFK) enzyme functions as a tetramer composed of different combinations of 3 types of subunits, called PFKM (where M stands for Muscle), PFKL (Liver) and PFKP (Platelet). The composition of the PFK tetramer differs according to the tissue type it is present in. In muscles, it is composed of 4 PFKM subunits (also called M4). In the liver, the predominant form is a tetramer of PFKL subunits (L4). In erythrocytes, both PFKM and PFKL subunits randomly tetramerize to form M4, L4 and other combinations (ML3, M2L2, M3L). In platelets, brain and fibroblasts, PFK contains a higher proportion of PFKP subunits. The kinetic and regulatory properties of the tetrameric enzyme are dependent on the subunit composition, hence can vary across tissues. Interacts with ATG4B; promoting phosphorylation of ATG4B. The cofactor is Mg(2+). Post-translationally, phosphorylation at Ser-386 promotes interaction with ATG4B. GlcNAcylation decreases enzyme activity.

It localises to the cytoplasm. The catalysed reaction is beta-D-fructose 6-phosphate + ATP = beta-D-fructose 1,6-bisphosphate + ADP + H(+). The protein operates within carbohydrate degradation; glycolysis; D-glyceraldehyde 3-phosphate and glycerone phosphate from D-glucose: step 3/4. Allosterically activated by ADP, AMP, or fructose 2,6-bisphosphate, and allosterically inhibited by ATP or citrate. Functionally, catalyzes the phosphorylation of D-fructose 6-phosphate to fructose 1,6-bisphosphate by ATP, the first committing step of glycolysis. This chain is ATP-dependent 6-phosphofructokinase, platelet type (PFKP), found in Homo sapiens (Human).